The chain runs to 620 residues: Chaperone protein HscA homolog (620 aa).

Belongs to the heat shock protein 70 family.

Chaperone involved in the maturation of iron-sulfur cluster-containing proteins. Has a low intrinsic ATPase activity which is markedly stimulated by HscB. The protein is Chaperone protein HscA homolog of Pseudomonas savastanoi pv. phaseolicola (strain 1448A / Race 6) (Pseudomonas syringae pv. phaseolicola (strain 1448A / Race 6)).